Here is an 86-residue protein sequence, read N- to C-terminus: Small ribosomal subunit protein bS20 (86 aa).

Positions 1–25 (MTNIKSQQKRNRTNERARLRNKSVK) are disordered.

Belongs to the bacterial ribosomal protein bS20 family.

Its function is as follows. Binds directly to 16S ribosomal RNA. The polypeptide is Small ribosomal subunit protein bS20 (Mycobacterium leprae (strain Br4923)).